Reading from the N-terminus, the 272-residue chain is 4-hydroxy-tetrahydrodipicolinate reductase (272 aa).

10-15 provides a ligand contact to NAD(+); sequence GAAGRM. Arg37 contacts NADP(+). NAD(+)-binding positions include 100–102 and 124–127; these read GTT and SGNM. The active-site Proton donor/acceptor is the His157. Residue His158 coordinates (S)-2,3,4,5-tetrahydrodipicolinate. Lys161 functions as the Proton donor in the catalytic mechanism. Residue 167–168 coordinates (S)-2,3,4,5-tetrahydrodipicolinate; sequence GT.

The protein belongs to the DapB family.

It localises to the cytoplasm. The catalysed reaction is (S)-2,3,4,5-tetrahydrodipicolinate + NAD(+) + H2O = (2S,4S)-4-hydroxy-2,3,4,5-tetrahydrodipicolinate + NADH + H(+). It catalyses the reaction (S)-2,3,4,5-tetrahydrodipicolinate + NADP(+) + H2O = (2S,4S)-4-hydroxy-2,3,4,5-tetrahydrodipicolinate + NADPH + H(+). It participates in amino-acid biosynthesis; L-lysine biosynthesis via DAP pathway; (S)-tetrahydrodipicolinate from L-aspartate: step 4/4. Functionally, catalyzes the conversion of 4-hydroxy-tetrahydrodipicolinate (HTPA) to tetrahydrodipicolinate. The chain is 4-hydroxy-tetrahydrodipicolinate reductase from Methylocella silvestris (strain DSM 15510 / CIP 108128 / LMG 27833 / NCIMB 13906 / BL2).